Here is a 132-residue protein sequence, read N- to C-terminus: MKRNRWIYAVFTILIIGLGLGSRAFSSVLPDTLNTYLGDSLWAAMIFTGCGFLFRKLKTMITGIISLSFCFVIEFSQLYHAEWIDQIRDTSLGGLVLGYGFLWSDIEAYTIGIAACAAIELLVLGIKKRRCM.

4 helical membrane-spanning segments follow: residues 6 to 26, 34 to 54, 59 to 79, and 106 to 126; these read WIYAVFTILIIGLGLGSRAFS, NTYLGDSLWAAMIFTGCGFLF, TMITGIISLSFCFVIEFSQLY, and IEAYTIGIAACAAIELLVLGI.

Its subcellular location is the cell membrane. This is an uncharacterized protein from Bacillus subtilis (strain 168).